The chain runs to 419 residues: MDAYSLSPTDSTTYSSDTFSTEFHTDAIAPPGNTPGNYTLDYNECFFNFCECCPPEKGPMGPMGERGLPGPPGERGPLGLPGEKGETGLRGPPGPAGLPGANGLNGDIGEKGDQGPVGLPGVPGIPGKPGEKGDPGLKGDKGERGFSGLKGDPGERGEPGLNGTKGSIGREGPMGPGLAGTKGLKGEQGLKGECLQGEKGERGPPGLRGEMGLNGTDGVKGERGEPGPLGGKGDTGARGPPGPPGGRGMAGLRGEKGLKGVRGPRGPKGPPGESVEQIRSAFSVGLFPSRSFPPPSLPVKFDKVFYNGEGHWDPTLNKFNVTYPGVYLFSYHITVRNRPVRAALVVNGVRKLRTRDSLYGQDIDQASNLALLHLTDGDQVWLETLRDWNGXYSSSEDDSTFSGFLLYPDTKKPTAMENL.

Residues 1-19 form the signal peptide; it reads MDAYSLSPTDSTTYSSDTF. The interval 20–57 is nonhelical region (NC2); sequence STEFHTDAIAPPGNTPGNYTLDYNECFFNFCECCPPEK. N-linked (GlcNAc...) asparagine glycosylation is present at asparagine 37. The interval 58-274 is triple-helical region (COL1); it reads GPMGPMGERG…RGPKGPPGES (217 aa). A disordered region spans residues 63 to 275; the sequence is MGERGLPGPP…GPKGPPGESV (213 aa). 2 stretches are compositionally biased toward basic and acidic residues: residues 129–144 and 184–202; these read PGEK…KGER and LKGE…KGER. The span at 227 to 236 shows a compositional bias: gly residues; sequence GPLGGKGDTG. The C1q domain occupies 275–412; sequence VEQIRSAFSV…GFLLYPDTKK (138 aa). The segment at 275 to 419 is nonhelical region (NC1); the sequence is VEQIRSAFSV…TKKPTAMENL (145 aa). Asparagine 320 is a glycosylation site (N-linked (GlcNAc...) asparagine).

In terms of tissue distribution, specialized secretory supporting cells at the outer perimeter of the saccular epithelium.

Its subcellular location is the secreted. It localises to the extracellular space. It is found in the extracellular matrix. Functionally, forms a microstructural matrix within the otolithic membrane. This is Inner ear-specific collagen from Lepomis macrochirus (Bluegill).